The sequence spans 149 residues: Deoxyuridine 5'-triphosphate nucleotidohydrolase (149 aa).

Substrate contacts are provided by residues 68 to 70, Asn-81, 85 to 87, and Lys-95; these read RSG and TVD.

Belongs to the dUTPase family. Mg(2+) serves as cofactor.

It carries out the reaction dUTP + H2O = dUMP + diphosphate + H(+). Its pathway is pyrimidine metabolism; dUMP biosynthesis; dUMP from dCTP (dUTP route): step 2/2. Its function is as follows. This enzyme is involved in nucleotide metabolism: it produces dUMP, the immediate precursor of thymidine nucleotides and it decreases the intracellular concentration of dUTP so that uracil cannot be incorporated into DNA. The sequence is that of Deoxyuridine 5'-triphosphate nucleotidohydrolase from Neorickettsia sennetsu (strain ATCC VR-367 / Miyayama) (Ehrlichia sennetsu).